A 155-amino-acid polypeptide reads, in one-letter code: Putative methyl-CpG-binding domain protein 12 (155 aa).

The CW-type zinc-finger motif lies at 1-53 (MVQCTDCKKWRLIPSMQHYNIIKETQLQTPFVCGTTSGWTPNMSCNVPQDGTT). An MBD-associated domain (MAD) motif is present at residues 3–45 (QCTDCKKWRLIPSMQHYNIIKETQLQTPFVCGTTSGWTPNMSC). The Zn(2+) site is built by Cys4, Cys7, Cys33, and Cys45. Positions 53-126 (TCDTWPSIPP…SQFSFQIPKP (74 aa)) constitute an MBD domain. The tract at residues 130-155 (NYVKKRTRPVKRRKSSKDNNCEKGKK) is disordered. The segment covering 133–144 (KKRTRPVKRRKS) has biased composition (basic residues). The Nuclear localization signal signature appears at 140 to 147 (KRRKSSKD). Over residues 145-155 (SKDNNCEKGKK) the composition is skewed to basic and acidic residues.

The protein localises to the nucleus. Probable transcriptional regulator. This is Putative methyl-CpG-binding domain protein 12 (MBD12) from Arabidopsis thaliana (Mouse-ear cress).